Reading from the N-terminus, the 316-residue chain is 4-hydroxy-3-methylbut-2-enyl diphosphate reductase (316 aa).

[4Fe-4S] cluster is bound at residue Cys-12. The (2E)-4-hydroxy-3-methylbut-2-enyl diphosphate site is built by His-41 and His-74. The dimethylallyl diphosphate site is built by His-41 and His-74. 2 residues coordinate isopentenyl diphosphate: His-41 and His-74. Position 96 (Cys-96) interacts with [4Fe-4S] cluster. A (2E)-4-hydroxy-3-methylbut-2-enyl diphosphate-binding site is contributed by His-124. Residue His-124 coordinates dimethylallyl diphosphate. His-124 serves as a coordination point for isopentenyl diphosphate. Glu-126 serves as the catalytic Proton donor. Residue Thr-167 participates in (2E)-4-hydroxy-3-methylbut-2-enyl diphosphate binding. Residue Cys-197 participates in [4Fe-4S] cluster binding. (2E)-4-hydroxy-3-methylbut-2-enyl diphosphate contacts are provided by Ser-225, Ser-226, Asn-227, and Ser-269. Dimethylallyl diphosphate-binding residues include Ser-225, Ser-226, Asn-227, and Ser-269. Isopentenyl diphosphate is bound by residues Ser-225, Ser-226, Asn-227, and Ser-269.

The protein belongs to the IspH family. Homodimer. The cofactor is [4Fe-4S] cluster.

The catalysed reaction is isopentenyl diphosphate + 2 oxidized [2Fe-2S]-[ferredoxin] + H2O = (2E)-4-hydroxy-3-methylbut-2-enyl diphosphate + 2 reduced [2Fe-2S]-[ferredoxin] + 2 H(+). It carries out the reaction dimethylallyl diphosphate + 2 oxidized [2Fe-2S]-[ferredoxin] + H2O = (2E)-4-hydroxy-3-methylbut-2-enyl diphosphate + 2 reduced [2Fe-2S]-[ferredoxin] + 2 H(+). It functions in the pathway isoprenoid biosynthesis; dimethylallyl diphosphate biosynthesis; dimethylallyl diphosphate from (2E)-4-hydroxy-3-methylbutenyl diphosphate: step 1/1. Its pathway is isoprenoid biosynthesis; isopentenyl diphosphate biosynthesis via DXP pathway; isopentenyl diphosphate from 1-deoxy-D-xylulose 5-phosphate: step 6/6. Functionally, catalyzes the conversion of 1-hydroxy-2-methyl-2-(E)-butenyl 4-diphosphate (HMBPP) into a mixture of isopentenyl diphosphate (IPP) and dimethylallyl diphosphate (DMAPP). Acts in the terminal step of the DOXP/MEP pathway for isoprenoid precursor biosynthesis. In Salmonella paratyphi B (strain ATCC BAA-1250 / SPB7), this protein is 4-hydroxy-3-methylbut-2-enyl diphosphate reductase.